A 146-amino-acid chain; its full sequence is Mu-like prophage FluMu G protein 1 (146 aa).

This sequence to phage Mu protein G.

The polypeptide is Mu-like prophage FluMu G protein 1 (Haemophilus influenzae (strain ATCC 51907 / DSM 11121 / KW20 / Rd)).